Reading from the N-terminus, the 125-residue chain is Holo-[acyl-carrier-protein] synthase (125 aa).

Mg(2+)-binding residues include Asp-8 and Glu-60.

The protein belongs to the P-Pant transferase superfamily. AcpS family. It depends on Mg(2+) as a cofactor.

The protein localises to the cytoplasm. The catalysed reaction is apo-[ACP] + CoA = holo-[ACP] + adenosine 3',5'-bisphosphate + H(+). In terms of biological role, transfers the 4'-phosphopantetheine moiety from coenzyme A to a Ser of acyl-carrier-protein. In Wolbachia sp. subsp. Brugia malayi (strain TRS), this protein is Holo-[acyl-carrier-protein] synthase.